The chain runs to 184 residues: Ribosome-recycling factor (184 aa).

Positions 141–161 (KKNDKAISEDDQRKGQDDVQK) are disordered.

This sequence belongs to the RRF family.

Its subcellular location is the cytoplasm. Responsible for the release of ribosomes from messenger RNA at the termination of protein biosynthesis. May increase the efficiency of translation by recycling ribosomes from one round of translation to another. In Solidesulfovibrio magneticus (strain ATCC 700980 / DSM 13731 / RS-1) (Desulfovibrio magneticus), this protein is Ribosome-recycling factor.